We begin with the raw amino-acid sequence, 314 residues long: 2-oxo-3-(phosphooxy)propyl 3-oxoalkanoate synthase (314 aa).

This sequence belongs to the AfsA family.

It catalyses the reaction a medium-chain 3-oxoacyl-[ACP] + dihydroxyacetone phosphate = a (4-alkanoyl-5-oxo-2,5-dihydrofuran-3-yl)methyl phosphate + holo-[ACP] + H2O. Its function is as follows. Involved of the biosynthesis of S.coelicolor butanolide 1 (SCB1), a gamma-butyrolactone that triggers antibiotic production. The sequence is that of 2-oxo-3-(phosphooxy)propyl 3-oxoalkanoate synthase from Streptomyces coelicolor (strain ATCC BAA-471 / A3(2) / M145).